The following is an 87-amino-acid chain: MTEKQVIHRILQGEVVSNKSDKSITVTVVRYVKHPLYGKYIKRTLRCHAHDENNECNIGDVVRISQSRPISKTKTWRLVEIVERAKG.

It belongs to the universal ribosomal protein uS17 family. In terms of assembly, part of the 30S ribosomal subunit.

Functionally, one of the primary rRNA binding proteins, it binds specifically to the 5'-end of 16S ribosomal RNA. The polypeptide is Small ribosomal subunit protein uS17 (Dichelobacter nodosus (strain VCS1703A)).